A 224-amino-acid polypeptide reads, in one-letter code: Octanoyltransferase (224 aa).

In terms of domain architecture, BPL/LPL catalytic spans 38–213 (SATVDELWWV…YLVRRLGYSA (176 aa)). Substrate is bound by residues 77–84 (RGGQVTYH), 144–146 (SLG), and 157–159 (GLS). The active-site Acyl-thioester intermediate is the C175.

Belongs to the LipB family.

It is found in the cytoplasm. The catalysed reaction is octanoyl-[ACP] + L-lysyl-[protein] = N(6)-octanoyl-L-lysyl-[protein] + holo-[ACP] + H(+). It participates in protein modification; protein lipoylation via endogenous pathway; protein N(6)-(lipoyl)lysine from octanoyl-[acyl-carrier-protein]: step 1/2. In terms of biological role, catalyzes the transfer of endogenously produced octanoic acid from octanoyl-acyl-carrier-protein onto the lipoyl domains of lipoate-dependent enzymes. Lipoyl-ACP can also act as a substrate although octanoyl-ACP is likely to be the physiological substrate. The sequence is that of Octanoyltransferase from Nitrosococcus oceani (strain ATCC 19707 / BCRC 17464 / JCM 30415 / NCIMB 11848 / C-107).